The sequence spans 244 residues: UPF0280 protein MJ1526 (244 aa).

Belongs to the UPF0280 family.

In Methanocaldococcus jannaschii (strain ATCC 43067 / DSM 2661 / JAL-1 / JCM 10045 / NBRC 100440) (Methanococcus jannaschii), this protein is UPF0280 protein MJ1526.